The sequence spans 365 residues: Dihydroorotate dehydrogenase (quinone) (365 aa).

Residues 61 to 65 (AGFDK) and Ser85 each bind FMN. Lys65 is a substrate binding site. 110–114 (NRMGF) lines the substrate pocket. Positions 139 and 170 each coordinate FMN. Asn170 lines the substrate pocket. Ser173 (nucleophile) is an active-site residue. Residue Asn175 participates in substrate binding. The FMN site is built by Lys214 and Ser242. 243–244 (NT) provides a ligand contact to substrate. Residues Gly266, Gly295, and 316-317 (YS) contribute to the FMN site.

Belongs to the dihydroorotate dehydrogenase family. Type 2 subfamily. As to quaternary structure, monomer. FMN serves as cofactor.

It localises to the cell membrane. The catalysed reaction is (S)-dihydroorotate + a quinone = orotate + a quinol. It functions in the pathway pyrimidine metabolism; UMP biosynthesis via de novo pathway; orotate from (S)-dihydroorotate (quinone route): step 1/1. Functionally, catalyzes the conversion of dihydroorotate to orotate with quinone as electron acceptor. The sequence is that of Dihydroorotate dehydrogenase (quinone) from Bradyrhizobium diazoefficiens (strain JCM 10833 / BCRC 13528 / IAM 13628 / NBRC 14792 / USDA 110).